Here is a 320-residue protein sequence, read N- to C-terminus: Phospho-N-acetylmuramoyl-pentapeptide-transferase (320 aa).

Transmembrane regions (helical) follow at residues 5 to 25 (FWAF…VIKF), 51 to 71 (MGGA…SVAY), 75 to 95 (IGFV…IIGG), 121 to 141 (LCAV…ILNI), 143 to 163 (FIGV…WLVG), 176 to 196 (GLLT…ALGV), 198 to 218 (NHII…FLLF), 241 to 261 (IESI…IFVI), and 300 to 320 (IDAL…LYMS).

It belongs to the glycosyltransferase 4 family. MraY subfamily. It depends on Mg(2+) as a cofactor.

The protein resides in the cell membrane. The catalysed reaction is UDP-N-acetyl-alpha-D-muramoyl-L-alanyl-gamma-D-glutamyl-L-lysyl-D-alanyl-D-alanine + di-trans,octa-cis-undecaprenyl phosphate = Mur2Ac(oyl-L-Ala-gamma-D-Glu-L-Lys-D-Ala-D-Ala)-di-trans,octa-cis-undecaprenyl diphosphate + UMP. The protein operates within cell wall biogenesis; peptidoglycan biosynthesis. In terms of biological role, catalyzes the initial step of the lipid cycle reactions in the biosynthesis of the cell wall peptidoglycan: transfers peptidoglycan precursor phospho-MurNAc-pentapeptide from UDP-MurNAc-pentapeptide onto the lipid carrier undecaprenyl phosphate, yielding undecaprenyl-pyrophosphoryl-MurNAc-pentapeptide, known as lipid I. This Leuconostoc mesenteroides subsp. mesenteroides (strain ATCC 8293 / DSM 20343 / BCRC 11652 / CCM 1803 / JCM 6124 / NCDO 523 / NBRC 100496 / NCIMB 8023 / NCTC 12954 / NRRL B-1118 / 37Y) protein is Phospho-N-acetylmuramoyl-pentapeptide-transferase.